A 664-amino-acid chain; its full sequence is Ent-copalyl diphosphate synthase 5 (664 aa).

Lysine 101 lines the substrate pocket. Mg(2+)-binding residues include aspartate 233 and aspartate 235. Positions 233-236 (DIDD) match the DXDD motif motif. Lysine 320 contributes to the substrate binding site.

It belongs to the terpene synthase family. Tpsc subfamily. It depends on Mg(2+) as a cofactor. Ubiquitous expression in roots, stems, leaves and flowers.

The protein resides in the plastid. It localises to the chloroplast. It catalyses the reaction (2E,6E,10E)-geranylgeranyl diphosphate = ent-copalyl diphosphate. It functions in the pathway secondary metabolite biosynthesis; terpenoid biosynthesis. Involved in the biosynthesis of ent-kaurene diterpenoids natural products such as oridonin, miltiradiene, eriocalyxin B and nezukol, known to exhibit antitumor, anti-inflammatory and antibacterial activities. Catalyzes the conversion of (2E,6E,10E)-geranylgeranyl diphosphate (GGPP) to ent-copalyl diphosphate (ent-CPP). This chain is Ent-copalyl diphosphate synthase 5, found in Isodon rubescens (Rabdosia rubescens).